Reading from the N-terminus, the 292-residue chain is S-methyl-5'-thioadenosine phosphorylase (292 aa).

Phosphate is bound by residues serine 11, 53–54 (RH), and 86–87 (SA). Substrate is bound at residue methionine 184. Threonine 185 is a binding site for phosphate. 208–210 (DYD) provides a ligand contact to substrate.

It belongs to the PNP/MTAP phosphorylase family. MTAP subfamily. As to quaternary structure, homohexamer. Dimer of a homotrimer.

The enzyme catalyses S-methyl-5'-thioadenosine + phosphate = 5-(methylsulfanyl)-alpha-D-ribose 1-phosphate + adenine. It participates in amino-acid biosynthesis; L-methionine biosynthesis via salvage pathway; S-methyl-5-thio-alpha-D-ribose 1-phosphate from S-methyl-5'-thioadenosine (phosphorylase route): step 1/1. Catalyzes the reversible phosphorylation of S-methyl-5'-thioadenosine (MTA) to adenine and 5-methylthioribose-1-phosphate. Involved in the breakdown of MTA, a major by-product of polyamine biosynthesis. Responsible for the first step in the methionine salvage pathway after MTA has been generated from S-adenosylmethionine. Has broad substrate specificity with 6-aminopurine nucleosides as preferred substrates. The chain is S-methyl-5'-thioadenosine phosphorylase from Koribacter versatilis (strain Ellin345).